A 730-amino-acid chain; its full sequence is Rap1 GTPase-activating protein 2 (730 aa).

Residues 247 to 463 (IVAYDEHEVN…RTRAALLDNL (217 aa)) enclose the Rap-GAP domain. Disordered stretches follow at residues 510–668 (MVGS…STAS) and 698–730 (SRSP…STSH). 2 stretches are compositionally biased toward polar residues: residues 535 to 557 (GEVT…QSRS) and 597 to 612 (HSSQ…NPSS). Basic and acidic residues predominate over residues 617-630 (PNKDRPFVKLKENG). Residues 631–651 (RSNISRSSSSTSSFSSTAGES) are compositionally biased toward low complexity. Residues 699–712 (RSPTDIKNRNSPRS) are compositionally biased toward polar residues.

Its subcellular location is the cytoplasm. GTPase activator for the nuclear Ras-related regulatory protein RAP-1A (KREV-1), converting it to the putatively inactive GDP-bound state. In Gallus gallus (Chicken), this protein is Rap1 GTPase-activating protein 2 (RAP1GAP2).